A 302-amino-acid chain; its full sequence is Protoheme IX farnesyltransferase (302 aa).

9 helical membrane-spanning segments follow: residues 26–46 (VVVL…PGQV), 48–68 (WVAL…AAAL), 98–118 (VLGF…LWIN), 120–140 (LTAA…TLYL), 148–168 (IVIG…AVTG), 174–194 (ALLL…ALAV), 221–241 (ILLY…TFMG), 244–264 (LYLA…VRLL), and 280–300 (IIYL…PVWL).

The protein belongs to the UbiA prenyltransferase family. Protoheme IX farnesyltransferase subfamily.

Its subcellular location is the cell inner membrane. It catalyses the reaction heme b + (2E,6E)-farnesyl diphosphate + H2O = Fe(II)-heme o + diphosphate. The protein operates within porphyrin-containing compound metabolism; heme O biosynthesis; heme O from protoheme: step 1/1. Converts heme B (protoheme IX) to heme O by substitution of the vinyl group on carbon 2 of heme B porphyrin ring with a hydroxyethyl farnesyl side group. The protein is Protoheme IX farnesyltransferase of Alkalilimnicola ehrlichii (strain ATCC BAA-1101 / DSM 17681 / MLHE-1).